The primary structure comprises 100 residues: Urease subunit gamma (100 aa).

The protein belongs to the urease gamma subunit family. As to quaternary structure, heterotrimer of UreA (gamma), UreB (beta) and UreC (alpha) subunits. Three heterotrimers associate to form the active enzyme.

It localises to the cytoplasm. The enzyme catalyses urea + 2 H2O + H(+) = hydrogencarbonate + 2 NH4(+). It functions in the pathway nitrogen metabolism; urea degradation; CO(2) and NH(3) from urea (urease route): step 1/1. The protein is Urease subunit gamma of Paraburkholderia phymatum (strain DSM 17167 / CIP 108236 / LMG 21445 / STM815) (Burkholderia phymatum).